Reading from the N-terminus, the 262-residue chain is Indole-3-glycerol phosphate synthase (262 aa).

It belongs to the TrpC family.

It catalyses the reaction 1-(2-carboxyphenylamino)-1-deoxy-D-ribulose 5-phosphate + H(+) = (1S,2R)-1-C-(indol-3-yl)glycerol 3-phosphate + CO2 + H2O. It participates in amino-acid biosynthesis; L-tryptophan biosynthesis; L-tryptophan from chorismate: step 4/5. This Staphylococcus epidermidis (strain ATCC 35984 / DSM 28319 / BCRC 17069 / CCUG 31568 / BM 3577 / RP62A) protein is Indole-3-glycerol phosphate synthase.